The sequence spans 683 residues: Protein distal antenna (683 aa).

An HTH psq-type domain is found at 7–58 (TKGKRPLRSLTPRDKIHAIQRIHDGESKASVARDIGVPESTLRGWCKNEDKL). Residues 34–54 (KASVARDIGVPESTLRGWCKN) constitute a DNA-binding region (H-T-H motif). Disordered regions lie at residues 220–255 (TANNLRNSKPSVQPPLQVQSPRSDSGDRTPGLSVKN), 336–369 (SPPIRSSTPQHIIQHAQTPPLPSAPLTPSSTPSG), 443–525 (SETP…SDCI), 572–597 (NQHSNNNDISASNNNNNNSNKTDEEE), and 652–683 (EPQVTEKPNKDLLENEENTEEDSCRNKIRRRK). Residues 227–242 (SKPSVQPPLQVQSPRS) show a composition bias toward low complexity. Composition is skewed to polar residues over residues 338-352 (PIRSSTPQHIIQHAQ) and 445-460 (TPSVRSLSSNEHNQLD). Over residues 462-478 (IEGDEVTDPDLDAEIEG) the composition is skewed to acidic residues. Residues 575–591 (SNNNDISASNNNNNNSN) are compositionally biased toward low complexity.

Homomers. Interacts with itself, danr, ey and dac to form a complex (or complexes) containing the RD factors.

It is found in the nucleus. Functionally, probable transcription factor with a role in the retinal determination (RD) network. Regulates ato expression and is required for normal R8 induction and differentiation. Danr appears to repress Dan expression, but Dan is required for Danr expression anterior to the morphogenetic furrow (MF). Dan and Danr lie downstream of so and require dac function for highest levels of expression. Contributes to differentiation of antenna-specific characteristics; effector gene that acts downstream of homothorax (hth), Distal-less (Dll), cut (ct) and spineless (ss) genes to control differentiation of distal antennal structures. This is Protein distal antenna from Drosophila pseudoobscura pseudoobscura (Fruit fly).